Consider the following 908-residue polypeptide: Zinc finger CCCH domain-containing protein 41 (908 aa).

Residues 1-13 are compositionally biased toward polar residues; sequence MELSVSSPKQSVL. The interval 1 to 124 is disordered; it reads MELSVSSPKQ…GRGNYGSWAQ (124 aa). A compositionally biased stretch (acidic residues) spans 20–34; the sequence is SDPEEEHEISEEEDD. 2 stretches are compositionally biased toward polar residues: residues 48-59 and 90-105; these read SQSLEQDSSDQA and GQRV…SNPM. The C3H1-type zinc finger occupies 200–228; sequence GIPRQRCRDFEERGFCLRGDMCPMEHGMN. The tract at residues 333 to 375 is disordered; that stretch reads NVAPLDDSNQDAAENGCGIRDSRSTSQSVWGRMKGSNSQANSK. Polar residues predominate over residues 356–373; the sequence is STSQSVWGRMKGSNSQAN. Residues 438 to 510 enclose the RRM domain; the sequence is RTLFVNYVPH…RFIKLWWANR (73 aa). 3 disordered regions span residues 558–590, 629–695, and 807–908; these read PTFQ…LQQK, VVKR…KQRP, and RESN…QIHQ. Polar residues predominate over residues 559–588; that stretch reads TFQTGGAPSSSEQPKPVVVTTSGPKVTPLQ. Residues 587 to 630 adopt a coiled-coil conformation; it reads LQQKKADTLERLKETLRKKQEMLEQKRNEYRKKLATLEKQGTVV. The span at 630–647 shows a compositional bias: basic and acidic residues; that stretch reads VKREEADEPDAKRVKLDT. Residue serine 657 is modified to Phosphoserine. Polar residues predominate over residues 677–688; that stretch reads AKLSTETPSPDS. Residues 807–828 show a composition bias toward low complexity; that stretch reads RESNNNNNNSNSLSVSRDNLSS. Over residues 846–863 the composition is skewed to polar residues; sequence KTSSTEEPENTNVSGDND. A compositionally biased stretch (basic and acidic residues) spans 865 to 886; the sequence is TLDKQETKESDNDNNKSNHESI. Positions 898–908 are enriched in acidic residues; the sequence is TDEEQSEQIHQ.

This Arabidopsis thaliana (Mouse-ear cress) protein is Zinc finger CCCH domain-containing protein 41.